A 708-amino-acid polypeptide reads, in one-letter code: MSIDDLKLPSNVIDIIKNRGIKKLNPPQTEAVKKGLLDGNRLLLTSPTGSGKTLIAEMGIISFLLKNGGKAIYVTPLRALTNEKYLTFKDWESIGFKVAMTSGDYDTDDAWLKNYDIIITTYEKLDSLWRHRPDWLNEANYFVLDELHYLNDPERGPVVESVTIRAKRRNLLALSATISNYKQIAKWLGAEPVATNWRPVPLMEGVMYPERKKKEYTILFRDNTARKVHGDDAIIAYTLDSLSKNGQVLVFRNSRKMAESTALKIANYMNFVSLDEKAISEILKQLDDIEEGGSDEKELLKSLISKGVAYHHAGLSKALRDIIEESFRKRKIKVIVATPTLAAGVNLPARTVIIGDIYRFNRKIVGYYDEIPVMEYKQMSGRAGRPGFDQIGESIIVVRDKEDVDRVFKKYILSDVEPIESKLGSERAFYTFLLGILSAEGSLSEKQLEAFAYESLLAKSVVDVYFDRAIRWLSEHSFIREENNTFTLTNFGKRVADLYINPFTADIIRKGLEGYKASCEIAYLHLLAFTPDGPLVSVGRNEEEELIELLEDLECELLVEEPYEEDEYSLYLNALKVALIMKDWIDEVDEDTILGKYNIGSGDLRNIVETMDWLTYSAYHLSKELRLDDHSDKLRILNLRVTDGVKEELLELVQIGGVGRKRARLLYNNGIKGLGDVVMNPDRVRNLLGQKLGERVVQEAARLLNRFH.

The Q motif motif lies at 1-29 (MSIDDLKLPSNVIDIIKNRGIKKLNPPQT). ATP contacts are provided by residues Gln28 and 46–53 (SPTGSGKT). One can recognise a Helicase ATP-binding domain in the interval 33–196 (KKGLLDGNRL…WLGAEPVATN (164 aa)). Positions 145 to 148 (DELH) match the DEAH box motif. One can recognise a Helicase C-terminal domain in the interval 229–435 (HGDDAIIAYT…ERAFYTFLLG (207 aa)).

It belongs to the helicase family. Hel308 subfamily. Monomer.

The enzyme catalyses Couples ATP hydrolysis with the unwinding of duplex DNA by translocating in the 3'-5' direction.. It catalyses the reaction ATP + H2O = ADP + phosphate + H(+). In terms of biological role, DNA-dependent ATPase and 3'-5' DNA helicase that may be involved in repair of stalled replication forks. The polypeptide is ATP-dependent DNA helicase Hel308 (Saccharolobus solfataricus (strain ATCC 35092 / DSM 1617 / JCM 11322 / P2) (Sulfolobus solfataricus)).